Here is a 458-residue protein sequence, read N- to C-terminus: Cysteine--tRNA ligase (458 aa).

Cys-29 contacts Zn(2+). The 'HIGH' region motif lies at Pro-31 to Asn-41. Residues Cys-214, His-239, and Glu-243 each contribute to the Zn(2+) site. The short motif at Lys-272 to Ser-276 is the 'KMSKS' region element. Lys-275 is an ATP binding site.

Belongs to the class-I aminoacyl-tRNA synthetase family. As to quaternary structure, monomer. The cofactor is Zn(2+).

The protein resides in the cytoplasm. The enzyme catalyses tRNA(Cys) + L-cysteine + ATP = L-cysteinyl-tRNA(Cys) + AMP + diphosphate. This Rickettsia bellii (strain OSU 85-389) protein is Cysteine--tRNA ligase.